The primary structure comprises 278 residues: MKFGVIGAGQMGGGIAQVAAQSGFDVVVHDQKQEFLDRGKGVIEKSLGKLHEKGKLTDAPETVLGRIHFTTDLQDFADCDLVVEAIVENQQIKNDLFKQLGQIVKPEGILASNTSSIPITALATASGRPAQFIGMHFMNPVPLMQLVEVIRGYQTSDETARIVTETAEKLGKTPLSCNDFPGFVSNRILMPMLNEAIQCVMEGVAEPEAIDGIMKLGMNHPMGPLTLADFIGLDTCLAIMEVLHQGLGDDKYRPSPLLRKMVQAGLLGRKSGEGFYKY.

This sequence belongs to the 3-hydroxyacyl-CoA dehydrogenase family.

It catalyses the reaction (3S)-3-hydroxybutanoyl-CoA + NADP(+) = acetoacetyl-CoA + NADPH + H(+). Its pathway is lipid metabolism; butanoate metabolism. The sequence is that of Probable 3-hydroxybutyryl-CoA dehydrogenase (hbd) from Deinococcus radiodurans (strain ATCC 13939 / DSM 20539 / JCM 16871 / CCUG 27074 / LMG 4051 / NBRC 15346 / NCIMB 9279 / VKM B-1422 / R1).